Here is a 431-residue protein sequence, read N- to C-terminus: Elongation factor 1-gamma (431 aa).

One can recognise a GST N-terminal domain in the interval 2-84 (VKGTLYTYPE…LLANEQLRGG (83 aa)). The GST C-terminal domain occupies 86 to 212 (CPFVQAQVQQ…YKLCEKALVF (127 aa)). A disordered region spans residues 223–261 (KTGAAKPQQQAQQQKQEKKPKEKKEAPKKAAEPAEELDA). The span at 226 to 236 (AAKPQQQAQQQ) shows a compositional bias: low complexity. Basic and acidic residues predominate over residues 237–254 (KQEKKPKEKKEAPKKAAE). Residues 272-431 (SKDPFDALPK…RKFNQGKIFK (160 aa)) enclose the EF-1-gamma C-terminal domain. Phosphoserine is present on Ser-294.

In terms of assembly, interacts with microtubules. May interact with BicDR; the interaction is probably indirect. Interacts (via C-terminus) with Doa; the interaction is probably direct, is transient and leads to phosphorylation of eEF1gamma by Doa. EF-1 is composed of four subunits: alpha, beta, delta, and gamma. In terms of processing, phosphorylated on Ser-294 by LAMMER kinases, including Doa. Phosphorylation on Ser-294 by Doa is required for negative regulation of microtubule-based transport.

The protein localises to the cytoplasm. It is found in the nucleus. It localises to the cytoskeleton. Its function is as follows. Microtubule binding protein involved in regulation of microtubule-based transport. Probably plays a role in anchoring the EF-1 complex to other cellular components. Probably involved in formation and/or development of mechanosensory organs during metamorphosis. Required for cellular and organismal viability. Not essential for the innate immune response to bacterial infection. The sequence is that of Elongation factor 1-gamma from Drosophila melanogaster (Fruit fly).